The sequence spans 1139 residues: Exportin-T (1139 aa).

A disordered region spans residues 562–589 (ARNKLRAAQGSGRTTPSSSDNVDLGPSS). Polar residues predominate over residues 572 to 589 (SGRTTPSSSDNVDLGPSS).

Belongs to the exportin family.

The protein resides in the nucleus. The protein localises to the cytoplasm. In terms of biological role, tRNA nucleus export receptor which facilitates tRNA translocation across the nuclear pore complex. Involved in pre-tRNA splicing, probably by affecting the interaction of pre-tRNA with splicing endonuclease. In Cryptococcus neoformans var. neoformans serotype D (strain B-3501A) (Filobasidiella neoformans), this protein is Exportin-T (LOS1).